The following is a 359-amino-acid chain: Carbamoyl phosphate synthase arginine-specific small chain (359 aa).

The interval 1-168 is CPSase; it reads MKAYLVLATG…VETFEGNGPH (168 aa). Serine 45, glycine 216, and glycine 218 together coordinate L-glutamine. One can recognise a Glutamine amidotransferase type-1 domain in the interval 168–355; the sequence is HIVLIDYGFK…IDDVAAKGRE (188 aa). The active-site Nucleophile is cysteine 243. Leucine 244, glutamine 247, asparagine 285, and tyrosine 288 together coordinate L-glutamine. Residues histidine 328 and glutamate 330 contribute to the active site.

It belongs to the CarA family. In terms of assembly, composed of two chains; the small (or glutamine) chain promotes the hydrolysis of glutamine to ammonia, which is used by the large (or ammonia) chain to synthesize carbamoyl phosphate. Tetramer of heterodimers (alpha,beta)4.

It carries out the reaction hydrogencarbonate + L-glutamine + 2 ATP + H2O = carbamoyl phosphate + L-glutamate + 2 ADP + phosphate + 2 H(+). It catalyses the reaction L-glutamine + H2O = L-glutamate + NH4(+). Its pathway is amino-acid biosynthesis; L-arginine biosynthesis; carbamoyl phosphate from bicarbonate: step 1/1. In terms of biological role, small subunit of the glutamine-dependent carbamoyl phosphate synthetase (CPSase). CPSase catalyzes the formation of carbamoyl phosphate from the ammonia moiety of glutamine, carbonate, and phosphate donated by ATP, constituting the first step of the biosynthetic pathway leading to arginine and/or urea. The small subunit (glutamine amidotransferase) binds and cleaves glutamine to supply the large subunit with the substrate ammonia. In Halalkalibacterium halodurans (strain ATCC BAA-125 / DSM 18197 / FERM 7344 / JCM 9153 / C-125) (Bacillus halodurans), this protein is Carbamoyl phosphate synthase arginine-specific small chain.